We begin with the raw amino-acid sequence, 557 residues long: Fatty acyl-CoA hydrolase precursor, medium chain (557 aa).

The first 25 residues, 1 to 25 (MATEKNTLLSLILTAGITALVATGQ), serve as a signal peptide directing secretion. Residues cysteine 93 and cysteine 122 are joined by a disulfide bond. The active-site Acyl-ester intermediate is the serine 227. Residues glutamate 345 and histidine 460 each act as charge relay system in the active site. N-linked (GlcNAc...) asparagine glycosylation occurs at asparagine 476.

This sequence belongs to the type-B carboxylesterase/lipase family. As to expression, highest levels in uropygial gland, much lower in liver and kidney.

Fatty acid biosynthesis chain termination and release of the free fatty acid product is achieved by hydrolysis of the thio ester by a thioesterase. This thioesterase may be associated with peroxisome proliferation and may play a role in the production of 3-hydroxy fatty acid diester pheromones. The polypeptide is Fatty acyl-CoA hydrolase precursor, medium chain (Anas platyrhynchos (Mallard)).